A 736-amino-acid polypeptide reads, in one-letter code: Catalase-peroxidase (736 aa).

Positions 1-21 (MFKKTILSFVISAVMVTAASA) are cleaved as a signal peptide. Positions 102–224 (WHAAGTYRTH…LAAVEMGLIY (123 aa)) form a cross-link, tryptophyl-tyrosyl-methioninium (Trp-Tyr) (with M-250). The active-site Proton acceptor is His103. The tryptophyl-tyrosyl-methioninium (Tyr-Met) (with W-102) cross-link spans 224 to 250 (YVNPVGPHGNPDPLLAANDIRMSFGRM). Residue His265 participates in heme b binding.

The protein belongs to the peroxidase family. Peroxidase/catalase subfamily. As to quaternary structure, homodimer or homotetramer. The cofactor is heme b. In terms of processing, formation of the three residue Trp-Tyr-Met cross-link is important for the catalase, but not the peroxidase activity of the enzyme.

The enzyme catalyses H2O2 + AH2 = A + 2 H2O. It catalyses the reaction 2 H2O2 = O2 + 2 H2O. In terms of biological role, bifunctional enzyme with both catalase and broad-spectrum peroxidase activity. The polypeptide is Catalase-peroxidase (Shewanella woodyi (strain ATCC 51908 / MS32)).